The sequence spans 644 residues: Sodium/potassium/calcium exchanger 3 (644 aa).

An N-terminal signal peptide occupies residues 1 to 44; it reads MRPSGDEDRARRRRRRRRRRDLLLSQLCFLASVALLLWSLSSLR. The Extracellular portion of the chain corresponds to 45 to 107; it reads EQKELDLMDL…DIFTNEDRRQ (63 aa). 2 N-linked (GlcNAc...) asparagine glycosylation sites follow: N71 and N86. Residues 108–128 form a helical membrane-spanning segment; sequence GAVVLHVLCAIYMFYALAIVC. The Cytoplasmic segment spans residues 129–153; that stretch reads DDFFVPSLEKICERLHLSEDVAGAT. Residues 149 to 189 form an Alpha-1 repeat; that stretch reads VAGATFMAAGSSAPELFTSVIGVFITKGDVGVGTIVGSAVF. A helical membrane pass occupies residues 154–174; it reads FMAAGSSAPELFTSVIGVFIT. The Extracellular portion of the chain corresponds to 175–182; sequence KGDVGVGT. Residues 183-203 traverse the membrane as a helical segment; that stretch reads IVGSAVFNILCIIGVCGLFAG. At 204 to 210 the chain is on the cytoplasmic side; that stretch reads QVVALSS. The chain crosses the membrane as a helical span at residues 211 to 231; the sequence is WCLLRDSIYYTLSVIALIVFI. The Extracellular portion of the chain corresponds to 232–234; the sequence is YDE. The helical transmembrane segment at 235–255 threads the bilayer; it reads KVSWWESLVLVLMYLIYIVIM. Residues 256–484 lie on the Cytoplasmic side of the membrane; that stretch reads KYNACIHQCF…WFMVTFASST (229 aa). Residue S308 is modified to Phosphoserine. The segment at 405-442 is disordered; it reads AEAGNETENENEDNENDEEEEEDEDDDEGPYTPFDTPS. Positions 409 to 433 are enriched in acidic residues; sequence NETENENEDNENDEEEEEDEDDDEG. A helical membrane pass occupies residues 485 to 505; sequence LWIAAFSYMMVWMVTIIGYTL. Residues 506-510 are Extracellular-facing; it reads GIPDV. The chain crosses the membrane as a helical span at residues 511 to 531; that stretch reads IMGITFLAAGTSVPDCMASLI. Residues 518–549 form an Alpha-2 repeat; that stretch reads AAGTSVPDCMASLIVARQGMGDMAVSNSIGSN. Over 532 to 549 the chain is Cytoplasmic; the sequence is VARQGMGDMAVSNSIGSN. Residues 550–570 traverse the membrane as a helical segment; that stretch reads VFDILIGLGLPWALQTLAVDY. The Extracellular segment spans residues 571 to 580; it reads GSYIRLNSRG. Residues 581-601 form a helical membrane-spanning segment; the sequence is LIYSVGLLLASVFVTVFGVHL. Over 602-615 the chain is Cytoplasmic; the sequence is NKWQLDKKLGCGCL. A helical membrane pass occupies residues 616 to 636; the sequence is LLYGVFLCFSIMTEFNVFTFV. Residues 637 to 644 lie on the Extracellular side of the membrane; that stretch reads NLPMCGDH.

The protein belongs to the Ca(2+):cation antiporter (CaCA) (TC 2.A.19) family. SLC24A subfamily. In terms of tissue distribution, abundant in the brain. Expressed at low levels in the aorta, uterus and intestine.

It is found in the cell membrane. The enzyme catalyses Ca(2+)(out) + K(+)(out) + 4 Na(+)(in) = Ca(2+)(in) + K(+)(in) + 4 Na(+)(out). Its function is as follows. Calcium, potassium:sodium antiporter that transports 1 Ca(2+) and 1 K(+) in exchange for 4 Na(+). The polypeptide is Sodium/potassium/calcium exchanger 3 (SLC24A3) (Homo sapiens (Human)).